A 539-amino-acid chain; its full sequence is DNA damage-binding protein CMR1 (539 aa).

Positions Leu22–Ser89 are disordered. Residues Glu27–Pro39 show a composition bias toward basic and acidic residues. WD repeat units lie at residues Val182–Gln223, Leu226–Asp268, Leu316–Thr356, Asn377–Leu415, Gly462–Leu505, and Ala508–Glu539.

This sequence belongs to the WD repeat DDB2/WDR76 family.

Its function is as follows. DNA-binding protein that binds to both single- and double-stranded DNA. Binds preferentially to UV-damaged DNA. May be involved in DNA-metabolic processes. In Yarrowia lipolytica (strain CLIB 122 / E 150) (Yeast), this protein is DNA damage-binding protein CMR1.